We begin with the raw amino-acid sequence, 873 residues long: DNA helicase/primase complex-associated protein (873 aa).

Residues 394-422 (PPLPRDDGDGENNVVEVSSSTGGAHPPSD) form a disordered region.

The protein belongs to the herpesviridae HEPA family. In terms of assembly, associates with the primase and the helicase to form the helicase-primase complex. Interacts with the origin-binding protein. Interacts with the polymerase catalytic subunit.

It is found in the host nucleus. Functionally, component of the helicase/primase complex. Unwinds the DNA at the replication forks and generates single-stranded DNA for both leading and lagging strand synthesis. The primase synthesizes short RNA primers on the lagging strand that the polymerase presumably elongates using dNTPs. The primase-associated factor has no known catalytic activity in the complex and may serve to facilitate the formation of the replisome by directly interacting with the origin-binding protein and the polymerase. In Human cytomegalovirus (strain Merlin) (HHV-5), this protein is DNA helicase/primase complex-associated protein (UL102).